Here is a 386-residue protein sequence, read N- to C-terminus: Uroporphyrinogen decarboxylase (386 aa).

Residues arginine 44, alanine 46, arginine 48, arginine 57, aspartate 93, tyrosine 170, serine 225, and histidine 364 each contribute to the coproporphyrinogen I site. 3 residues coordinate coproporphyrinogen III: arginine 44, alanine 46, and arginine 48. Coproporphyrinogen III-binding residues include aspartate 93, tyrosine 170, serine 225, and histidine 364.

This sequence belongs to the uroporphyrinogen decarboxylase family. As to quaternary structure, homodimer.

It localises to the cytoplasm. The protein resides in the cytosol. The catalysed reaction is uroporphyrinogen III + 4 H(+) = coproporphyrinogen III + 4 CO2. It functions in the pathway porphyrin-containing compound metabolism; protoporphyrin-IX biosynthesis; coproporphyrinogen-III from 5-aminolevulinate: step 4/4. Functionally, catalyzes the decarboxylation of four acetate groups of uroporphyrinogen-III to yield coproporphyrinogen-III. This chain is Uroporphyrinogen decarboxylase, found in Drosophila virilis (Fruit fly).